The chain runs to 204 residues: UPF0637 protein SAR1080 (204 aa).

This sequence belongs to the UPF0637 family.

The protein is UPF0637 protein SAR1080 of Staphylococcus aureus (strain MRSA252).